A 62-amino-acid polypeptide reads, in one-letter code: Large ribosomal subunit protein uL30 (62 aa).

It belongs to the universal ribosomal protein uL30 family. As to quaternary structure, part of the 50S ribosomal subunit.

This chain is Large ribosomal subunit protein uL30, found in Ruegeria pomeroyi (strain ATCC 700808 / DSM 15171 / DSS-3) (Silicibacter pomeroyi).